We begin with the raw amino-acid sequence, 310 residues long: Protein A56 (310 aa).

A signal peptide spans 1 to 16 (MKQLSIVILLLSIVYT). Residues 17–275 (TKPHPTQISK…TKYTTSDFIE (259 aa)) lie on the Virion surface side of the membrane. An Ig-like V-type domain is found at 19 to 121 (PHPTQISKKL…TNDTDKIDYE (103 aa)). Cysteines 36 and 105 form a disulfide. Residues asparagine 39, asparagine 113, and asparagine 133 are each glycosylated (N-linked (GlcNAc...) asparagine; by host). Positions 153–195 (HTEEQHDSDTTICTSESTTQISETSESTTSSQISETSESTSYG) are disordered. Residues 162–193 (TTICTSESTTQISETSESTTSSQISETSESTS) are compositionally biased toward low complexity. Asparagine 203 carries N-linked (GlcNAc...) asparagine; by host glycosylation. A helical transmembrane segment spans residues 276–300 (IFGIVSLILLLAVAIFCIIYYFCSG). Residues 301–310 (RSRKQETNIL) are Intravirion-facing.

As to quaternary structure, heterodimerizes with K2. The heterodimer A56/K2 interacts with components of the entry fusion complex A16 and G9. Interacts with K2 protein. Heterodimer with C3/VPC protein; disulfide-linked. Post-translationally, glycosylated; contains phosphate and sulfate-substituted glycans. O-glycosylation is required for hemagglutination and hemadsorption activities of infected cell membranes.

The protein resides in the virion membrane. It localises to the host membrane. Prevents cell to cell fusion by interacting with and directing the viral K2 protein on the host plasma membrane. The A56-K2 complex associates with components of the entry fusion complex (EFC) presumably to avoid superinfection and syncytium formation. Via its interaction with C3/VCP protein, protects the infected cell and probably also the extracellular enveloped virus from complement attack. The chain is Protein A56 (HA) from Raccoon poxvirus (RCN).